A 407-amino-acid polypeptide reads, in one-letter code: Tryptophan synthase beta chain (407 aa).

The span at 1–11 (MSTAPSQQHAS) shows a compositional bias: polar residues. The interval 1–25 (MSTAPSQQHASAQVPDPRGRFGDFG) is disordered. Residue Lys-100 is modified to N6-(pyridoxal phosphate)lysine.

It belongs to the TrpB family. As to quaternary structure, tetramer of two alpha and two beta chains. Pyridoxal 5'-phosphate is required as a cofactor.

The catalysed reaction is (1S,2R)-1-C-(indol-3-yl)glycerol 3-phosphate + L-serine = D-glyceraldehyde 3-phosphate + L-tryptophan + H2O. Its pathway is amino-acid biosynthesis; L-tryptophan biosynthesis; L-tryptophan from chorismate: step 5/5. Its function is as follows. The beta subunit is responsible for the synthesis of L-tryptophan from indole and L-serine. In Rhodopirellula baltica (strain DSM 10527 / NCIMB 13988 / SH1), this protein is Tryptophan synthase beta chain.